The sequence spans 175 residues: Large ribosomal subunit protein bL17 (175 aa).

The interval 124–175 (VKKSKPTAPAQAVATKPAVEETREAAAAQPQEPEVEISEVKDPAEECEAKAD) is disordered. Residues 161 to 175 (SEVKDPAEECEAKAD) are compositionally biased toward basic and acidic residues.

This sequence belongs to the bacterial ribosomal protein bL17 family. As to quaternary structure, part of the 50S ribosomal subunit. Contacts protein L32.

This is Large ribosomal subunit protein bL17 from Geobacter sulfurreducens (strain ATCC 51573 / DSM 12127 / PCA).